The sequence spans 239 residues: MTKAPIAGNRTGRKLGQRVKNKKMKASSRQWLQRHINDPYVQRAQLEGYRARAAFKLLEIDEKYHILRGAKRIIDLGAAPGSWSQIAAKVTGSTDEDIRVAAIDFLEMAQLPGVWILQLDFLDPSAPGKLMEAVGGTPDLVISDMAAPTTGHHRTDHLRTMHLCEVAAHFAIEVLGEGGHFLTKTFQGGTERDLLAMLKQNFRQVVHVKPNSSRAESVEMFLLAKGFKGRKAEGDAEEA.

A disordered region spans residues 1–20; that stretch reads MTKAPIAGNRTGRKLGQRVK. Residues 11-20 are compositionally biased toward basic residues; that stretch reads TGRKLGQRVK. S-adenosyl-L-methionine is bound by residues G81, W83, D104, D120, and D144. K184 functions as the Proton acceptor in the catalytic mechanism.

The protein belongs to the class I-like SAM-binding methyltransferase superfamily. RNA methyltransferase RlmE family.

It localises to the cytoplasm. It catalyses the reaction uridine(2552) in 23S rRNA + S-adenosyl-L-methionine = 2'-O-methyluridine(2552) in 23S rRNA + S-adenosyl-L-homocysteine + H(+). Functionally, specifically methylates the uridine in position 2552 of 23S rRNA at the 2'-O position of the ribose in the fully assembled 50S ribosomal subunit. This chain is Ribosomal RNA large subunit methyltransferase E, found in Rhizobium etli (strain ATCC 51251 / DSM 11541 / JCM 21823 / NBRC 15573 / CFN 42).